The sequence spans 126 residues: Nascent polypeptide-associated complex protein (126 aa).

Positions 10 to 77 constitute an NAC-A/B domain; that stretch reads PRMMKQMQKM…AKKVAKAEEK (68 aa).

The protein belongs to the NAC-alpha family. As to quaternary structure, homodimer. Interacts with the ribosome. Binds ribosomal RNA.

Its function is as follows. Contacts the emerging nascent chain on the ribosome. In Methanococcus maripaludis (strain C5 / ATCC BAA-1333), this protein is Nascent polypeptide-associated complex protein.